The sequence spans 411 residues: ACT domain-containing protein ACR9 (411 aa).

3 ACT domains span residues V22–K105, L111–P194, and L243–V322.

In terms of biological role, may bind amino acids. In Arabidopsis thaliana (Mouse-ear cress), this protein is ACT domain-containing protein ACR9.